The primary structure comprises 182 residues: CDP-diacylglycerol--glycerol-3-phosphate 3-phosphatidyltransferase (182 aa).

Residues 2–12 (QFNIPTLLTLF) are Cytoplasmic-facing. The chain crosses the membrane as a helical span at residues 13 to 37 (RVALIPFFVLAFYLPFVWAPLLCAL). Over 38–60 (IFVFAAVTDWFDGFLARRWKQTT) the chain is Periplasmic. A helical transmembrane segment spans residues 61-81 (RFGAFLDPVADKVMVAVALVL). At 82–86 (VAEYY) the chain is on the cytoplasmic side. A helical transmembrane segment spans residues 87–107 (HSWWITLPAATMIAREIIISA). The Periplasmic portion of the chain corresponds to 108 to 145 (LREWMAEIGKRSSVAVSWIGKVKTTAQMMALFALLWRP). The helical transmembrane segment at 146–168 (ERIVEGIGVAALYIAAVLTFWSM) threads the bilayer. Residues 169-181 (FQYLNAARHDLLE) lie on the Cytoplasmic side of the membrane.

Belongs to the CDP-alcohol phosphatidyltransferase class-I family.

It is found in the cell inner membrane. The catalysed reaction is a CDP-1,2-diacyl-sn-glycerol + sn-glycerol 3-phosphate = a 1,2-diacyl-sn-glycero-3-phospho-(1'-sn-glycero-3'-phosphate) + CMP + H(+). The protein operates within phospholipid metabolism; phosphatidylglycerol biosynthesis; phosphatidylglycerol from CDP-diacylglycerol: step 1/2. In terms of biological role, catalyzes the conversion of cytidine diphosphate diacylglycerol (CDP-DG) and glycerol 3-phosphate into phosphatidylglycerol. Essential for the synthesis of anionic phospholipids, thereby playing a role in balancing the ratio of zwitterionic and anionic phospholipids, which is thought to be important for normal membrane function. The protein is CDP-diacylglycerol--glycerol-3-phosphate 3-phosphatidyltransferase of Pectobacterium atrosepticum (strain SCRI 1043 / ATCC BAA-672) (Erwinia carotovora subsp. atroseptica).